A 487-amino-acid chain; its full sequence is Betaine aldehyde dehydrogenase (487 aa).

I27 and D93 together coordinate K(+). Residue 149–151 participates in NAD(+) binding; sequence GAW. The active-site Charge relay system is K161. Residues 175–178 and 228–231 each bind NAD(+); these read KPSE and SVPT. L243 provides a ligand contact to K(+). E249 serves as the catalytic Proton acceptor. NAD(+) is bound by residues G251, C283, and E384. C283 acts as the Nucleophile in catalysis. C283 bears the Cysteine sulfenic acid (-SOH) mark. The K(+) site is built by K454 and G457. Catalysis depends on E461, which acts as the Charge relay system.

The protein belongs to the aldehyde dehydrogenase family. In terms of assembly, dimer of dimers. The cofactor is K(+).

The catalysed reaction is betaine aldehyde + NAD(+) + H2O = glycine betaine + NADH + 2 H(+). It functions in the pathway amine and polyamine biosynthesis; betaine biosynthesis via choline pathway; betaine from betaine aldehyde: step 1/1. In terms of biological role, involved in the biosynthesis of the osmoprotectant glycine betaine. Catalyzes the irreversible oxidation of betaine aldehyde to the corresponding acid. The chain is Betaine aldehyde dehydrogenase from Brucella suis (strain ATCC 23445 / NCTC 10510).